The sequence spans 342 residues: Maltose regulon regulatory protein MalI (342 aa).

Residues 7 to 61 enclose the HTH lacI-type domain; it reads ITIHDVALAAGVSVSTVSLVLSGKGRISTATGERVNAAIEELGFVRNRQASALRG. Positions 9 to 28 form a DNA-binding region, H-T-H motif; the sequence is IHDVALAAGVSVSTVSLVLS.

In terms of biological role, repressor for the malX and malY genes. Also regulates its own expression. Binds maltose as an inducer. This Escherichia coli (strain K12) protein is Maltose regulon regulatory protein MalI (malI).